The sequence spans 310 residues: MFEHVTVLKNESVIGLNIKPDGIYVDCTLGGAGHSQEIVKQLTGGGHLYAFDQDQYALSHAKETLSPYRGSFTLIESNFRYMREKLEELGVHHVDGVLFDLGVSSPQLDEDERGFSYHRDAPLDMRMNRSQSLSAYEVVNQWDFIELMKIISRYGEERFAKQIARKIEQSREKKPIRTTGELVDIIKEAIPAPARRTGGHPAKRTFQAIRIAVNDELGAFEEALEAAIDLTAPKGRICVITFHSLEDRICKEMFREASKGPDVPPGLPVIPEEYKATLKLITKKPIVPTAEEIELNNRARSAKLRIAEKQ.

Residues 32–34, Asp52, Phe79, Asp100, and Gln107 each bind S-adenosyl-L-methionine; that span reads AGH.

It belongs to the methyltransferase superfamily. RsmH family.

It localises to the cytoplasm. The catalysed reaction is cytidine(1402) in 16S rRNA + S-adenosyl-L-methionine = N(4)-methylcytidine(1402) in 16S rRNA + S-adenosyl-L-homocysteine + H(+). In terms of biological role, specifically methylates the N4 position of cytidine in position 1402 (C1402) of 16S rRNA. This chain is Ribosomal RNA small subunit methyltransferase H, found in Halalkalibacterium halodurans (strain ATCC BAA-125 / DSM 18197 / FERM 7344 / JCM 9153 / C-125) (Bacillus halodurans).